The chain runs to 729 residues: Elongation factor 2 (729 aa).

The 244-residue stretch at 19 to 262 (EQIRNIAIAA…MVCEHFPNPI (244 aa)) folds into the tr-type G domain. Residues 28–35 (AHVDHGKT), 94–98 (DTPGH), and 148–151 (NKVD) contribute to the GTP site. Histidine 597 carries the diphthamide modification.

It belongs to the TRAFAC class translation factor GTPase superfamily. Classic translation factor GTPase family. EF-G/EF-2 subfamily.

It localises to the cytoplasm. Catalyzes the GTP-dependent ribosomal translocation step during translation elongation. During this step, the ribosome changes from the pre-translocational (PRE) to the post-translocational (POST) state as the newly formed A-site-bound peptidyl-tRNA and P-site-bound deacylated tRNA move to the P and E sites, respectively. Catalyzes the coordinated movement of the two tRNA molecules, the mRNA and conformational changes in the ribosome. This is Elongation factor 2 from Halomicrobium mukohataei (strain ATCC 700874 / DSM 12286 / JCM 9738 / NCIMB 13541) (Haloarcula mukohataei).